Reading from the N-terminus, the 162-residue chain is uncharacterized protein (162 aa).

3 Pentapeptide repeat domains span residues 33-72, 73-112, and 113-152; these read ASLIGAQLIFVDLGGANLTRAQLDSATLKNANLALANMTE, VCLIYADLSNADLSGANLVGADLTNADLSGAKLGGADLRK, and ANLSEASLRGADLRGVNLIEANLTNTDFSEADLTGAYISD.

This is an uncharacterized protein from Synechocystis sp. (strain ATCC 27184 / PCC 6803 / Kazusa).